We begin with the raw amino-acid sequence, 603 residues long: UvrABC system protein C (603 aa).

The GIY-YIG domain maps to 15-92 (DQPGCYLMKD…IKKHDPRFNI (78 aa)). The UVR domain maps to 197–232 (KTVKNDLMKKMQEAAENMEFEKAGEFRDQINAIETT).

The protein belongs to the UvrC family. As to quaternary structure, interacts with UvrB in an incision complex.

The protein localises to the cytoplasm. In terms of biological role, the UvrABC repair system catalyzes the recognition and processing of DNA lesions. UvrC both incises the 5' and 3' sides of the lesion. The N-terminal half is responsible for the 3' incision and the C-terminal half is responsible for the 5' incision. This chain is UvrABC system protein C, found in Listeria monocytogenes serovar 1/2a (strain ATCC BAA-679 / EGD-e).